We begin with the raw amino-acid sequence, 81 residues long: Protein Vpu (81 aa).

Topologically, residues Met1–Leu7 are extracellular. A helical membrane pass occupies residues Ala8–Ile28. Residues Glu29–Leu81 are Cytoplasmic-facing. The interval Ala50–Leu81 is disordered. Phosphoserine; by host CK2 is present on residues Ser53 and Ser57. The segment covering Ser53–Glu63 has biased composition (acidic residues).

It belongs to the HIV-1 VPU protein family. In terms of assembly, homopentamer. Interacts with host CD4 and BRTC; these interactions induce proteasomal degradation of CD4. Interacts with host BST2; this interaction leads to the degradation of host BST2. Interacts with host FBXW11. Interacts with host AP1M1; this interaction plays a role in the mistrafficking and subsequent degradation of host BST2. Interacts with host RANBP2; this interaction allows Vpu to down-regulate host BLM sumoylation. In terms of processing, phosphorylated by host CK2. This phosphorylation is necessary for interaction with human BTRC and degradation of CD4.

The protein localises to the host membrane. With respect to regulation, ion channel activity is inhibited by hexamethylene amiloride in vitro. Enhances virion budding by targeting host CD4 and Tetherin/BST2 to proteasome degradation. Degradation of CD4 prevents any unwanted premature interactions between viral Env and its host receptor CD4 in the endoplasmic reticulum. Degradation of antiretroviral protein Tetherin/BST2 is important for virion budding, as BST2 tethers new viral particles to the host cell membrane. Mechanistically, Vpu bridges either CD4 or BST2 to BTRC, a substrate recognition subunit of the Skp1/Cullin/F-box protein E3 ubiquitin ligase, induces their ubiquitination and subsequent proteasomal degradation. The alteration of the E3 ligase specificity by Vpu seems to promote the degradation of host IKBKB, leading to NF-kappa-B down-regulation and subsequent apoptosis. Acts as a viroporin that forms an oligomeric ion channel in membranes. Modulates the host DNA repair mechanisms to promote degradation of nuclear viral cDNA in cells that are already productively infected in order to suppress immune sensing and proviral hyper-integration (superinfection). Manipulates PML-NBs and modulates SUMOylation of host BLM protein thereby enhancing its DNA-end processing activity toward viral unintegrated linear DNA. Also inhibits RAD52-mediated homologous repair of viral cDNA, preventing the generation of dead-end circular forms of single copies of the long terminal repeat and permitting sustained nucleolytic attack. This Human immunodeficiency virus type 1 group M subtype B (isolate SF162) (HIV-1) protein is Protein Vpu.